The chain runs to 224 residues: Deoxyribose-phosphate aldolase (224 aa).

Asp-92 (proton donor/acceptor) is an active-site residue. Lys-155 (schiff-base intermediate with acetaldehyde) is an active-site residue. The active-site Proton donor/acceptor is the Lys-184.

This sequence belongs to the DeoC/FbaB aldolase family. DeoC type 1 subfamily.

Its subcellular location is the cytoplasm. It carries out the reaction 2-deoxy-D-ribose 5-phosphate = D-glyceraldehyde 3-phosphate + acetaldehyde. It functions in the pathway carbohydrate degradation; 2-deoxy-D-ribose 1-phosphate degradation; D-glyceraldehyde 3-phosphate and acetaldehyde from 2-deoxy-alpha-D-ribose 1-phosphate: step 2/2. Catalyzes a reversible aldol reaction between acetaldehyde and D-glyceraldehyde 3-phosphate to generate 2-deoxy-D-ribose 5-phosphate. This Clostridium perfringens (strain ATCC 13124 / DSM 756 / JCM 1290 / NCIMB 6125 / NCTC 8237 / Type A) protein is Deoxyribose-phosphate aldolase.